Reading from the N-terminus, the 328-residue chain is NADH-cytochrome b5 reductase-like protein (328 aa).

One can recognise an FAD-binding FR-type domain in the interval 76-184; that stretch reads DKWLEFKLQD…KGPVEKFKYS (109 aa). T201 carries the post-translational modification Phosphothreonine.

It belongs to the flavoprotein pyridine nucleotide cytochrome reductase family. Requires FAD as cofactor.

It localises to the mitochondrion. It catalyses the reaction 2 Fe(III)-[cytochrome b5] + NADH = 2 Fe(II)-[cytochrome b5] + NAD(+) + H(+). In terms of biological role, desaturation and elongation of fatty acids. This is NADH-cytochrome b5 reductase-like protein (CBR2) from Arabidopsis thaliana (Mouse-ear cress).